We begin with the raw amino-acid sequence, 252 residues long: MKAVVYNLNGEAVKEIDLPAVFEEEYRPDLIKRAFLSAFTARLQPKGSDPLAGLRTSAKNIGKGHGRARVDRVPQGWAARVPQAVGGRRAHPPKVEKILWERVNKKERIKAIKSAIAATANPELVKERGHVFETENLPIIVESSFEELQKTKDVFAVFEKLGISDDVIRAKNGIKIRAGKGKMRGRKYKKPRSILVVVGDKCNAILASRNLPGVDVITAKDLGIIHLAPGGVAGRLTVWTESALEKLKERFE.

Belongs to the universal ribosomal protein uL4 family. In terms of assembly, part of the 50S ribosomal subunit.

One of the primary rRNA binding proteins, this protein initially binds near the 5'-end of the 23S rRNA. It is important during the early stages of 50S assembly. It makes multiple contacts with different domains of the 23S rRNA in the assembled 50S subunit and ribosome. Its function is as follows. Forms part of the polypeptide exit tunnel. The sequence is that of Large ribosomal subunit protein uL4 from Methanocaldococcus jannaschii (strain ATCC 43067 / DSM 2661 / JAL-1 / JCM 10045 / NBRC 100440) (Methanococcus jannaschii).